Here is a 94-residue protein sequence, read N- to C-terminus: Ribonuclease VapC3 (94 aa).

Aspartate 6 contributes to the Mg(2+) binding site.

The protein belongs to the PINc/VapC protein family. Requires Mg(2+) as cofactor.

Its function is as follows. Toxic component of a type II toxin-antitoxin (TA) system. An RNase. Its cognate antitoxin is VapB3. This is Ribonuclease VapC3 (vapC3) from Methanocaldococcus jannaschii (strain ATCC 43067 / DSM 2661 / JAL-1 / JCM 10045 / NBRC 100440) (Methanococcus jannaschii).